The primary structure comprises 289 residues: Cell division protein ZipA (289 aa).

Residue Met1 is a topological domain, periplasmic. A helical membrane pass occupies residues 2-22; that stretch reads DIGLREWLIVIGLIVIAGILF. Residues 23–289 are Cytoplasmic-facing; the sequence is DGWRRMRGGK…HERRSLMQKR (267 aa). A disordered region spans residues 66–141; that stretch reads REPSFDEQDL…KEREKAPAVA (76 aa). A compositionally biased stretch (basic and acidic residues) spans 81 to 99; the sequence is REAKERKGGKRQEEPRQGD. A compositionally biased stretch (acidic residues) spans 100–114; it reads LDLDEGLALEADPSD.

It belongs to the ZipA family. In terms of assembly, interacts with FtsZ via their C-terminal domains.

It localises to the cell inner membrane. Its function is as follows. Essential cell division protein that stabilizes the FtsZ protofilaments by cross-linking them and that serves as a cytoplasmic membrane anchor for the Z ring. Also required for the recruitment to the septal ring of downstream cell division proteins. This is Cell division protein ZipA from Pseudomonas aeruginosa (strain LESB58).